Consider the following 211-residue polypeptide: Phosphoserine phosphatase 1 (211 aa).

The active-site Tele-phosphohistidine intermediate is H9. Residue H150 is part of the active site.

This sequence belongs to the histidine phosphatase superfamily. Metal-independent phosphoserine phosphatase family. In terms of assembly, homodimer. Can also form a heterodimer with PspB.

It carries out the reaction O-phospho-L-serine + H2O = L-serine + phosphate. The enzyme catalyses O-phospho-D-serine + H2O = D-serine + phosphate. Its pathway is amino-acid biosynthesis; L-serine biosynthesis; L-serine from 3-phospho-D-glycerate: step 3/3. Its activity is regulated as follows. Activity is not inhibited by EDTA in vitro, nor enhanced by the addition of Mg(2+). In terms of biological role, catalyzes the dephosphorylation of L-phosphoserine to serine and inorganic phosphate. Is poorly or not active toward D-phosphoserine, DL-phosphothreonine, 3-phosphoglycerate, para-nitrophenylphosphate, and fructose-6-phosphate. Does not display phosphoglycerate mutase activity. The polypeptide is Phosphoserine phosphatase 1 (pspA) (Hydrogenobacter thermophilus (strain DSM 6534 / IAM 12695 / TK-6)).